A 328-amino-acid chain; its full sequence is UPF0421 protein SAV1889 (328 aa).

Transmembrane regions (helical) follow at residues 19–39, 61–81, 108–128, and 132–152; these read IAIF…IYAI, LPAT…FGDQ, VAVL…IFNF, and TLTA…VFPP.

This sequence belongs to the UPF0421 family.

Its subcellular location is the cell membrane. This is UPF0421 protein SAV1889 from Staphylococcus aureus (strain Mu50 / ATCC 700699).